Reading from the N-terminus, the 260-residue chain is Carbonic anhydrase 3 (260 aa).

Ala-2 carries the N-acetylalanine modification. Positions 3 to 259 constitute an Alpha-carbonic anhydrase domain; that stretch reads KEWGYASHNG…VKGRVVRASF (257 aa). Phosphoserine is present on residues Ser-29, Ser-43, Ser-48, Ser-50, and Ser-55. The interval 64–67 is involved in proton transfer; sequence KTCR. Phosphothreonine is present on Thr-73. Residues His-94, His-96, and His-119 each coordinate Zn(2+). Tyr-127 is modified (phosphotyrosine). 2 positions are modified to phosphothreonine: Thr-129 and Thr-176. Residues Cys-182 and Cys-187 each carry the S-glutathionyl cysteine modification. 198–199 contributes to the substrate binding site; the sequence is TT. Thr-216 bears the Phosphothreonine mark. Ser-219 is modified (phosphoserine).

The protein belongs to the alpha-carbonic anhydrase family. The cofactor is Zn(2+). S-thiolated both by thiol-disulfide exchange with glutathione disulfide and by oxyradical-initiated S-thiolation with reduced glutathione. Post-translationally, S-glutathionylated in hepatocytes under oxidative stress. Expressed at lower levels in adipose tissue from animals that were either genetically obese or had experimentally induced obesity.

It is found in the cytoplasm. The catalysed reaction is hydrogencarbonate + H(+) = CO2 + H2O. With respect to regulation, inhibited by acetazolamide. Functionally, reversible hydration of carbon dioxide. The protein is Carbonic anhydrase 3 of Mus musculus (Mouse).